The primary structure comprises 183 residues: Putative manganese efflux pump MntP 1 (183 aa).

The next 6 helical transmembrane spans lie at 6–26 (LFLL…CIGI), 36–56 (MIFV…GGYI), 64–84 (IVPI…ILMI), 100–120 (IMYL…GFTT), 130–150 (LFMS…LGII), and 158–178 (ISII…LFGL).

It belongs to the MntP (TC 9.B.29) family.

It localises to the cell membrane. In terms of biological role, probably functions as a manganese efflux pump. The polypeptide is Putative manganese efflux pump MntP 1 (Clostridium botulinum (strain Hall / ATCC 3502 / NCTC 13319 / Type A)).